Consider the following 188-residue polypeptide: Elongation factor P (188 aa).

This sequence belongs to the elongation factor P family.

Its subcellular location is the cytoplasm. It functions in the pathway protein biosynthesis; polypeptide chain elongation. In terms of biological role, involved in peptide bond synthesis. Stimulates efficient translation and peptide-bond synthesis on native or reconstituted 70S ribosomes in vitro. Probably functions indirectly by altering the affinity of the ribosome for aminoacyl-tRNA, thus increasing their reactivity as acceptors for peptidyl transferase. The protein is Elongation factor P of Streptomyces avermitilis (strain ATCC 31267 / DSM 46492 / JCM 5070 / NBRC 14893 / NCIMB 12804 / NRRL 8165 / MA-4680).